The following is a 274-amino-acid chain: MGTLSVNQNKLQKRLRRLAGEAITDFNMIEDGDKVMVCLSGGKDSYTMLDILLYLQKVAPIRFEIVAVNMDQKQPGFPEHVLPEYLKSIGVEYHIVEKDTYSVVKEKIPEGKTTCSLCSRLRRGTLYTFADEIGATKMALGHHRDDILETFFLNMFYGGTLKAMPPKLLADDGRNVVIRPLAYCSEKDIEAYSQLKEFPIIPCNLCGSQENLQRQVVKEMLLEWERKSPGRTEIMFRALQNVVPSQLADRNLFDFASLRIDESATPRFLDVMNL.

The PP-loop motif motif lies at 40-45; it reads SGGKDS. [4Fe-4S] cluster contacts are provided by Cys-115, Cys-118, and Cys-206.

It belongs to the TtcA family. In terms of assembly, homodimer. The cofactor is Mg(2+). [4Fe-4S] cluster is required as a cofactor.

It is found in the cytoplasm. It catalyses the reaction cytidine(32) in tRNA + S-sulfanyl-L-cysteinyl-[cysteine desulfurase] + AH2 + ATP = 2-thiocytidine(32) in tRNA + L-cysteinyl-[cysteine desulfurase] + A + AMP + diphosphate + H(+). It participates in tRNA modification. In terms of biological role, catalyzes the ATP-dependent 2-thiolation of cytidine in position 32 of tRNA, to form 2-thiocytidine (s(2)C32). The sulfur atoms are provided by the cysteine/cysteine desulfurase (IscS) system. The chain is tRNA-cytidine(32) 2-sulfurtransferase from Pseudomonas paraeruginosa (strain DSM 24068 / PA7) (Pseudomonas aeruginosa (strain PA7)).